Here is a 252-residue protein sequence, read N- to C-terminus: Probable transcriptional regulatory protein CE1776 (252 aa).

The tract at residues 1-22 (MAGHSKWATTKHKKAANDAKRG) is disordered.

This sequence belongs to the TACO1 family.

The protein localises to the cytoplasm. The protein is Probable transcriptional regulatory protein CE1776 of Corynebacterium efficiens (strain DSM 44549 / YS-314 / AJ 12310 / JCM 11189 / NBRC 100395).